The primary structure comprises 296 residues: ATP synthase gamma chain (296 aa).

The segment at 194–216 (IPASAGQAANDNAGSDQPAGDYE) is disordered.

This sequence belongs to the ATPase gamma chain family. F-type ATPases have 2 components, CF(1) - the catalytic core - and CF(0) - the membrane proton channel. CF(1) has five subunits: alpha(3), beta(3), gamma(1), delta(1), epsilon(1). CF(0) has three main subunits: a, b and c.

Its subcellular location is the cell inner membrane. Produces ATP from ADP in the presence of a proton gradient across the membrane. The gamma chain is believed to be important in regulating ATPase activity and the flow of protons through the CF(0) complex. The polypeptide is ATP synthase gamma chain (Acidiphilium cryptum (strain JF-5)).